The sequence spans 213 residues: MKSLQALFGGTFDPVHYGHLKPVETLANLIGLTRVTIIPNNVPPHRPQPEANSVQRKHMLELAIADKPLFTLDERELKRNAPSYTAQTLKEWRQEQGPDVPLAFIIGQDSLLTFPTWYEYETILDNAHLIVCRRPGYPLEMAQPQYQQWLEDHLTHNPEDLHLQPAGKIYLAETPWFNISATIIRERLQNGESCEDLLPEPVLTYINQQGLYR.

It belongs to the NadD family.

The catalysed reaction is nicotinate beta-D-ribonucleotide + ATP + H(+) = deamido-NAD(+) + diphosphate. The protein operates within cofactor biosynthesis; NAD(+) biosynthesis; deamido-NAD(+) from nicotinate D-ribonucleotide: step 1/1. In terms of biological role, catalyzes the reversible adenylation of nicotinate mononucleotide (NaMN) to nicotinic acid adenine dinucleotide (NaAD). The protein is Probable nicotinate-nucleotide adenylyltransferase of Escherichia coli O139:H28 (strain E24377A / ETEC).